The chain runs to 1044 residues: Ribonucleoside-diphosphate reductase subunit alpha (1044 aa).

ATP-cone domains lie at 9-111 (YTIV…KAER), 118-217 (IAII…ARAR), and 235-325 (YVVQ…ETLG). Residues Thr440, 455 to 456 (SC), Gly484, 668 to 672 (NLCTE), and 855 to 859 (PTATI) each bind substrate. Cys456 and Cys685 are disulfide-bonded. Asn668 acts as the Proton acceptor in catalysis. The active-site Cysteine radical intermediate is the Cys670. Glu672 acts as the Proton acceptor in catalysis.

It belongs to the ribonucleoside diphosphate reductase large chain family. Tetramer of two alpha and two beta subunits.

The catalysed reaction is a 2'-deoxyribonucleoside 5'-diphosphate + [thioredoxin]-disulfide + H2O = a ribonucleoside 5'-diphosphate + [thioredoxin]-dithiol. Its activity is regulated as follows. Under complex allosteric control mediated by deoxynucleoside triphosphates and ATP binding. The type of nucleotide bound at the specificity site determines substrate preference. It seems probable that ATP makes the enzyme reduce CDP and UDP, dGTP favors ADP reduction and dTTP favors GDP reduction. In terms of biological role, provides the precursors necessary for DNA synthesis. Catalyzes the biosynthesis of deoxyribonucleotides from the corresponding ribonucleotides. This Chlamydia pneumoniae (Chlamydophila pneumoniae) protein is Ribonucleoside-diphosphate reductase subunit alpha (nrdA).